Consider the following 128-residue polypeptide: Large ribosomal subunit protein bL17 (128 aa).

The protein belongs to the bacterial ribosomal protein bL17 family. Part of the 50S ribosomal subunit. Contacts protein L32.

The polypeptide is Large ribosomal subunit protein bL17 (Streptococcus gordonii (strain Challis / ATCC 35105 / BCRC 15272 / CH1 / DL1 / V288)).